The chain runs to 446 residues: Solute carrier family 52, riboflavin transporter, member 2 (446 aa).

Helical transmembrane passes span 14–34 (LLVA…WVEL), 47–67 (LPSY…VVTL), 79–99 (APIQ…APLW), and 104–124 (VMAG…LALA). The N-linked (GlcNAc...) asparagine glycan is linked to N129. Transmembrane regions (helical) follow at residues 147-167 (FFLG…GQGV) and 196-216 (FFGA…GLLL). The disordered stretch occupies residues 228-267 (GSGTGLRGGAPGVEEEEEEEASPLQEPPSQAAGNTPSPDP). Gly residues predominate over residues 229 to 238 (SGTGLRGGAP). The segment covering 254–263 (PPSQAAGNTP) has biased composition (polar residues). Transmembrane regions (helical) follow at residues 278–298 (ACLL…LPAV), 313–333 (LAVV…MGIL), 340–360 (LGGL…LAIL), 367–387 (VGTS…LGVF), and 405–425 (ALLA…VTMF).

The protein belongs to the riboflavin transporter family.

It is found in the cell membrane. It carries out the reaction riboflavin(in) = riboflavin(out). Riboflavin transport is Na(+)-independent but moderately pH-sensitive. Activity is strongly inhibited by riboflavin analogs, such as lumiflavin. Weakly inhibited by flavin adenine dinucleotide (FAD) and flavin mononucleotide (FMN). In terms of biological role, plasma membrane transporter mediating the uptake by cells of the water soluble vitamin B2/riboflavin that plays a key role in biochemical oxidation-reduction reactions of the carbohydrate, lipid, and amino acid metabolism. May also act as a receptor for 4-hydroxybutyrate. Its function is as follows. (Microbial infection) In case of infection by porcine endogenous retrovirus (PERV-A), acts as a cell receptor to retroviral envelopes. The sequence is that of Solute carrier family 52, riboflavin transporter, member 2 (SLC52A2) from Sus scrofa (Pig).